The sequence spans 505 residues: Deoxyguanosinetriphosphate triphosphohydrolase (505 aa).

The region spanning 66 to 273 is the HD domain; sequence RLTHSMEVQQ…MEAADDISYC (208 aa).

It belongs to the dGTPase family. Type 1 subfamily. In terms of assembly, homotetramer. Mg(2+) serves as cofactor.

It carries out the reaction dGTP + H2O = 2'-deoxyguanosine + triphosphate + H(+). Functionally, dGTPase preferentially hydrolyzes dGTP over the other canonical NTPs. This chain is Deoxyguanosinetriphosphate triphosphohydrolase, found in Shigella boydii serotype 18 (strain CDC 3083-94 / BS512).